Reading from the N-terminus, the 452-residue chain is Glutamate--tRNA ligase 2 (452 aa).

The 'HIGH' region motif lies at 8–18; sequence PSPTGRLHVGN. The 'KMSKS' region motif lies at 246-250; sequence KLSKR. An ATP-binding site is contributed by Lys-249.

This sequence belongs to the class-I aminoacyl-tRNA synthetase family. Glutamate--tRNA ligase type 1 subfamily. As to quaternary structure, monomer.

It localises to the cytoplasm. It catalyses the reaction tRNA(Glu) + L-glutamate + ATP = L-glutamyl-tRNA(Glu) + AMP + diphosphate. Its function is as follows. Catalyzes the attachment of glutamate to tRNA(Glu) in a two-step reaction: glutamate is first activated by ATP to form Glu-AMP and then transferred to the acceptor end of tRNA(Glu). This chain is Glutamate--tRNA ligase 2, found in Erythrobacter litoralis (strain HTCC2594).